A 230-amino-acid polypeptide reads, in one-letter code: Large ribosomal subunit protein uL1 (230 aa).

It belongs to the universal ribosomal protein uL1 family. Part of the 50S ribosomal subunit.

Its function is as follows. Binds directly to 23S rRNA. The L1 stalk is quite mobile in the ribosome, and is involved in E site tRNA release. In terms of biological role, protein L1 is also a translational repressor protein, it controls the translation of the L11 operon by binding to its mRNA. This is Large ribosomal subunit protein uL1 from Lactobacillus gasseri (strain ATCC 33323 / DSM 20243 / BCRC 14619 / CIP 102991 / JCM 1131 / KCTC 3163 / NCIMB 11718 / NCTC 13722 / AM63).